We begin with the raw amino-acid sequence, 212 residues long: Probable transaldolase (212 aa).

K84 (schiff-base intermediate with substrate) is an active-site residue.

It belongs to the transaldolase family. Type 3B subfamily.

It localises to the cytoplasm. The catalysed reaction is D-sedoheptulose 7-phosphate + D-glyceraldehyde 3-phosphate = D-erythrose 4-phosphate + beta-D-fructose 6-phosphate. The protein operates within carbohydrate degradation; pentose phosphate pathway; D-glyceraldehyde 3-phosphate and beta-D-fructose 6-phosphate from D-ribose 5-phosphate and D-xylulose 5-phosphate (non-oxidative stage): step 2/3. Functionally, transaldolase is important for the balance of metabolites in the pentose-phosphate pathway. In Bacillus pumilus (strain SAFR-032), this protein is Probable transaldolase.